Consider the following 213-residue polypeptide: Ras-related protein Rab-19 (213 aa).

GTP-binding residues include Ser24, Val26, Gly27, Lys28, Thr29, Cys30, Asp42, and Thr47. Thr29 is a Mg(2+) binding site. The Switch 1 motif lies at 37 to 52 (SGIFMDNQQNTIGVDF). 2 residues coordinate Mg(2+): Thr47 and Asp70. The Switch 2 motif lies at 72-87 (AGQERFRTITQSYYRS). GTP contacts are provided by Gly73, Asn128, Lys129, Asp131, Ser159, Ala160, and Lys161. Residues Cys211 and Cys213 are each lipidated (S-geranylgeranyl cysteine). Cys213 is subject to Cysteine methyl ester.

The protein belongs to the small GTPase superfamily. Rab family. Requires Mg(2+) as cofactor.

It is found in the cell membrane. The catalysed reaction is GTP + H2O = GDP + phosphate + H(+). Regulated by guanine nucleotide exchange factors (GEFs) which promote the exchange of bound GDP for free GTP. Regulated by GTPase activating proteins (GAPs) which increase the GTP hydrolysis activity. Inhibited by GDP dissociation inhibitors (GDIs). Functionally, the small GTPases Rab are key regulators of intracellular membrane trafficking, from the formation of transport vesicles to their fusion with membranes. Rabs cycle between an inactive GDP-bound form and an active GTP-bound form that is able to recruit to membranes different set of downstream effectors directly responsible for vesicle formation, movement, tethering and fusion. This is Ras-related protein Rab-19 (rab19) from Xenopus laevis (African clawed frog).